We begin with the raw amino-acid sequence, 380 residues long: Large ribosomal subunit protein mL38 (380 aa).

The N-terminal 26 residues, 1–26 (MAAPWWRAAFSVTGRCRGISTSASLS), are a transit peptide targeting the mitochondrion. The stretch at 98–123 (SRTQKLQERKRFLQELRANSEEERAA) forms a coiled coil.

This sequence belongs to the phosphatidylethanolamine-binding protein family. Mitochondrion-specific ribosomal protein mL38 subfamily. Component of the mitochondrial ribosome large subunit (39S) which comprises a 16S rRNA and about 50 distinct proteins.

The protein resides in the mitochondrion. This chain is Large ribosomal subunit protein mL38 (Mrpl38), found in Rattus norvegicus (Rat).